The following is a 351-amino-acid chain: MTIAVGRAPQRGWFDVLDDWLKRDRFVFVGWSGILLLPTAYLAIGGWLTGTTFVTSWYTHGIASSYLEGCNFLTAAVSTPADAMGHSLLLLWGPEAQGDFVRWCQLGGLWAFVALHGAFALIGFMLRQFEIARLVGIRPYNAIAFSGPIAVFVSVFLMYPLGQSSWFFAPSFGVAAIFRFLLFLQGFHNWTLNPFHMMGVAGILGGALLCAIHGATVENTLFEDGEQANTFKAFEPTQEEETYSMVTANRFWSQIFGIAFSNKRWLHFFMLFVPVMGLWTSSIGIIGLALNLRAYDFVSQEIRAAEDPEFETFYTKNILLNEGLRAWMAPADQPHENFVFPEEVLPRGNAL.

Residues 39–59 (TAYLAIGGWLTGTTFVTSWYT) form a helical membrane-spanning segment. His-116 serves as a coordination point for chlorophyll a. A helical transmembrane segment spans residues 123-139 (GFMLRQFEIARLVGIRP). Residues Gln-128 and Asn-141 each contribute to the pheophytin a site. The helical transmembrane segment at 151–164 (VFVSVFLMYPLGQS) threads the bilayer. His-196 contacts chlorophyll a. A helical membrane pass occupies residues 206-226 (GALLCAIHGATVENTLFEDGE). Residues His-213 and Phe-260 each coordinate a plastoquinone. Residue His-213 coordinates Fe cation. A Fe cation-binding site is contributed by His-267. Residues 277–293 (GLWTSSIGIIGLALNLR) traverse the membrane as a helical segment.

Belongs to the reaction center PufL/M/PsbA/D family. As to quaternary structure, PSII is composed of 1 copy each of membrane proteins PsbA, PsbB, PsbC, PsbD, PsbE, PsbF, PsbH, PsbI, PsbJ, PsbK, PsbL, PsbM, PsbT, PsbX, PsbY, PsbZ, Psb30/Ycf12, peripheral proteins PsbO, CyanoQ (PsbQ), PsbU, PsbV and a large number of cofactors. It forms dimeric complexes. Requires The D1/D2 heterodimer binds P680, chlorophylls that are the primary electron donor of PSII, and subsequent electron acceptors. It shares a non-heme iron and each subunit binds pheophytin, quinone, additional chlorophylls, carotenoids and lipids. There is also a Cl(-1) ion associated with D1 and D2, which is required for oxygen evolution. The PSII complex binds additional chlorophylls, carotenoids and specific lipids. as cofactor.

The protein resides in the cellular thylakoid membrane. It carries out the reaction 2 a plastoquinone + 4 hnu + 2 H2O = 2 a plastoquinol + O2. Photosystem II (PSII) is a light-driven water:plastoquinone oxidoreductase that uses light energy to abstract electrons from H(2)O, generating O(2) and a proton gradient subsequently used for ATP formation. It consists of a core antenna complex that captures photons, and an electron transfer chain that converts photonic excitation into a charge separation. The D1/D2 (PsbA/PsbD) reaction center heterodimer binds P680, the primary electron donor of PSII as well as several subsequent electron acceptors. D2 is needed for assembly of a stable PSII complex. This chain is Photosystem II D2 protein, found in Synechococcus sp. (strain CC9605).